Consider the following 119-residue polypeptide: U-scoloptoxin(01)-Cw1a (119 aa).

The N-terminal stretch at 1-22 is a signal peptide; it reads MSKATNFYLFVLLGVFVALVRT. The region spanning 38–96 is the Chitin-binding type-2 domain; the sequence is SFSCDGKKPGYYADQQMECQVYHVCTPDNEHAVLLCGPGTIFNQKHLVCDFPSNYACAD. A disulfide bond links Cys73 and Cys86.

Belongs to the scoloptoxin-01 family. In terms of processing, contains 3 disulfide bonds. Expressed by the venom gland.

The protein localises to the secreted. This Cormocephalus westwoodi (Westwood's green centipede) protein is U-scoloptoxin(01)-Cw1a.